A 195-amino-acid chain; its full sequence is MRESIVERRTSETDIVLKIGLDRTEPHQITISTGIPFFDHMVQAMSRHGGFDLNITAKGDLEVDSHHTIEDIGIVLGTALQQALGDGRGIKRFGYAIIPMDEALAEAVLDCGGRGYLVFKGTFGNSTVGGIDTSLFEHFFYSLCIHAGITAHIRFSGQNDHHTAEAIFKAFGIALGQAVTIIPESNQIPSTKGTL.

Belongs to the imidazoleglycerol-phosphate dehydratase family.

It is found in the cytoplasm. It carries out the reaction D-erythro-1-(imidazol-4-yl)glycerol 3-phosphate = 3-(imidazol-4-yl)-2-oxopropyl phosphate + H2O. It functions in the pathway amino-acid biosynthesis; L-histidine biosynthesis; L-histidine from 5-phospho-alpha-D-ribose 1-diphosphate: step 6/9. This chain is Imidazoleglycerol-phosphate dehydratase, found in Methanosphaerula palustris (strain ATCC BAA-1556 / DSM 19958 / E1-9c).